The sequence spans 162 residues: uncharacterized protein (162 aa).

The HTH asnC-type domain occupies 6–99 (LDDLDRAILK…YVTKTLSGFP (94 aa)). The H-T-H motif DNA-binding region spans 25-44 (IAEISNQLKKPESTVHFRIK).

This is an uncharacterized protein from Pyrococcus horikoshii (strain ATCC 700860 / DSM 12428 / JCM 9974 / NBRC 100139 / OT-3).